A 96-amino-acid chain; its full sequence is Large ribosomal subunit protein eL21 (96 aa).

This sequence belongs to the eukaryotic ribosomal protein eL21 family.

This Methanothrix thermoacetophila (strain DSM 6194 / JCM 14653 / NBRC 101360 / PT) (Methanosaeta thermophila) protein is Large ribosomal subunit protein eL21.